A 228-amino-acid chain; its full sequence is Putative N-acetylmannosamine-6-phosphate 2-epimerase (228 aa).

The protein belongs to the NanE family.

The catalysed reaction is an N-acyl-D-glucosamine 6-phosphate = an N-acyl-D-mannosamine 6-phosphate. It participates in amino-sugar metabolism; N-acetylneuraminate degradation; D-fructose 6-phosphate from N-acetylneuraminate: step 3/5. Converts N-acetylmannosamine-6-phosphate (ManNAc-6-P) to N-acetylglucosamine-6-phosphate (GlcNAc-6-P). This is Putative N-acetylmannosamine-6-phosphate 2-epimerase from Mycoplasmopsis pulmonis (strain UAB CTIP) (Mycoplasma pulmonis).